A 169-amino-acid polypeptide reads, in one-letter code: RNA annealing protein YRA2 (169 aa).

In terms of domain architecture, RRM spans 45-119 (KRLRFTNVPL…GTVTVEIFEQ (75 aa)). Positions 119-169 (QERRPDRRRRTQRDNRRGNGRGSRGSHYKRQDRPAMEDELNAELEDYMKSS) are disordered.

It belongs to the YRA1 family. As to quaternary structure, associates with mRNPs.

It localises to the nucleus. Involved in export of poly(A) mRNAs from the nucleus. Recruited to the coding sequences as well as poly-A sites of active genes. This is RNA annealing protein YRA2 (YRA2) from Zygosaccharomyces rouxii (strain ATCC 2623 / CBS 732 / NBRC 1130 / NCYC 568 / NRRL Y-229).